The chain runs to 337 residues: Tryptophan--tRNA ligase (337 aa).

Residues Arg-9–Thr-11 and Gly-17–His-18 contribute to the ATP site. Residues Pro-10–His-18 carry the 'HIGH' region motif. Asp-137 contacts L-tryptophan. Residues Gly-149–Asp-151, Leu-187, and Lys-195–Ser-199 each bind ATP. The 'KMSKS' region signature appears at Lys-195–Ser-199.

The protein belongs to the class-I aminoacyl-tRNA synthetase family. As to quaternary structure, homodimer.

It localises to the cytoplasm. The catalysed reaction is tRNA(Trp) + L-tryptophan + ATP = L-tryptophyl-tRNA(Trp) + AMP + diphosphate + H(+). Functionally, catalyzes the attachment of tryptophan to tRNA(Trp). The polypeptide is Tryptophan--tRNA ligase (Treponema pallidum (strain Nichols)).